A 466-amino-acid chain; its full sequence is 3-isopropylmalate dehydratase large subunit (466 aa).

Residues C347, C407, and C410 each contribute to the [4Fe-4S] cluster site.

The protein belongs to the aconitase/IPM isomerase family. LeuC type 1 subfamily. In terms of assembly, heterodimer of LeuC and LeuD. It depends on [4Fe-4S] cluster as a cofactor.

The catalysed reaction is (2R,3S)-3-isopropylmalate = (2S)-2-isopropylmalate. Its pathway is amino-acid biosynthesis; L-leucine biosynthesis; L-leucine from 3-methyl-2-oxobutanoate: step 2/4. In terms of biological role, catalyzes the isomerization between 2-isopropylmalate and 3-isopropylmalate, via the formation of 2-isopropylmaleate. This Buchnera aphidicola subsp. Diuraphis noxia protein is 3-isopropylmalate dehydratase large subunit.